The primary structure comprises 843 residues: MGFLSKIADGNKKEIKRLGKLADKVLALEEDMSILTDEEIKAKTSAFQEKLQSEEDIKKQNKILDDILPEAFALVREGSKRVFNMIPYKVQVMGGIAIHGGDISEMRTGEGKTLTATMPVYLNALTGRGVHVITVNEYLSSVQSQEMAELYEFLGLSVGLNLNSKTTTEKREAYACDITYCTNNELGFDYLRDNMVNYAEERVMRPLNFAIIDEVDSILIDEARTPLIISGEAEKSTSLYTQANVFAKMLKSEDDYNYDEKTKAVQLTEQGIDKAERMFKIDNLYDVNNVDVISHINTALRAHVTLQRDVDYMVNKGEVLIVDQFTGRTMPGRRFSEGLHQAIEAKEGVKIQNESKTMASITFQNYFRMYNKLSGMTGTAKTEEEEFRNIYNMTVTQIPTNKPVQRVDKPDLIYISQKGKFDAVVQDVIEKHKAGQPVLLGTVAVETSEYISNLLKKNGVRHDVLNAKNHEREADIVAGAGQRGAVTIATNMAGRGTDIKLGDGVQELGGLAVIGTERHESRRIDDQLRGRSGRQGDKGDSRFYLSLQDELMVRFGSERLQNMMNRLGMDDSTPIESKMVSRAVESAQKRVEGNNFDARKRVLEYDDVLRKQREIIYGERNSIIDSDESGGLVNDMLRSTLERSVNYYVNEEADDPDYEPFINYVDDVFLNEGDIKVEDIKGKDNEDIFEFVWNKVEIALKDQKEKIGTQFDEFERMILLRSIDTHWTDHIDTMDQLRQGIHLRSYGQQNPLRDYQNEGHQLFDTMMQNIEEDVSKYILKSVVSVEDDLERDKTTDFGKAEHVSAEDGKEKAKAEPYVKDEHIGRNDPCPCGSGKKYKNCHGA.

Residues Q91, 109–113, and D498 contribute to the ATP site; that span reads GEGKT. Residues 796–825 show a composition bias toward basic and acidic residues; sequence DFGKAEHVSAEDGKEKAKAEPYVKDEHIGR. Residues 796 to 833 form a disordered region; sequence DFGKAEHVSAEDGKEKAKAEPYVKDEHIGRNDPCPCGS. Zn(2+) is bound by residues C829, C831, C840, and H841.

This sequence belongs to the SecA family. Monomer and homodimer. Part of the essential Sec protein translocation apparatus which comprises SecA, SecYEG and auxiliary proteins SecDF. Other proteins may also be involved. Zn(2+) serves as cofactor.

The protein localises to the cell membrane. It localises to the cytoplasm. It carries out the reaction ATP + H2O + cellular proteinSide 1 = ADP + phosphate + cellular proteinSide 2.. Its function is as follows. Part of the Sec protein translocase complex. Interacts with the SecYEG preprotein conducting channel. Has a central role in coupling the hydrolysis of ATP to the transfer of proteins into and across the cell membrane, serving as an ATP-driven molecular motor driving the stepwise translocation of polypeptide chains across the membrane. In Staphylococcus saprophyticus subsp. saprophyticus (strain ATCC 15305 / DSM 20229 / NCIMB 8711 / NCTC 7292 / S-41), this protein is Protein translocase subunit SecA.